A 250-amino-acid polypeptide reads, in one-letter code: Green-light absorbing proteorhodopsin (250 aa).

A signal peptide spans 1–18; it reads MGKLLLILGSVIALPTFA. Residues 19 to 29 are Extracellular-facing; sequence AGGGDLDASDY. The chain crosses the membrane as a helical span at residues 30–53; that stretch reads TGVSFWLVTAALLASTVFFFVERD. Over 54–58 the chain is Cytoplasmic; that stretch reads RVSAK. The chain crosses the membrane as a helical span at residues 59-87; that stretch reads WKTSLTVSGLVTGIAFWHYMYMRGVWIET. The Extracellular portion of the chain corresponds to 88–90; the sequence is GDS. The helical transmembrane segment at 91–118 threads the bilayer; it reads PTVFRYIDWLLTVPLLICEFYLILAAAT. Topologically, residues 119-121 are cytoplasmic; sequence NVA. A helical membrane pass occupies residues 122–144; sequence GSLFKKLLVGSLVMLVFGYMGEA. Topologically, residues 145–147 are extracellular; sequence GIM. Residues 148–177 traverse the membrane as a helical segment; the sequence is AAWPAFIIGCLAWVYMIYELWAGEGKSACN. Over 178–180 the chain is Cytoplasmic; the sequence is TAS. The chain crosses the membrane as a helical span at residues 181–208; the sequence is PAVQSAYNTMMYIIIFGWAIYPVGYFTG. Residues 209–218 are Extracellular-facing; that stretch reads YLMGDGGSAL. Residues 219 to 249 traverse the membrane as a helical segment; the sequence is NLNLIYNLADFVNKILFGLIIWNVAVKESSN. Lys232 carries the post-translational modification N6-(retinylidene)lysine. Position 250 (Ala250) is a topological domain, cytoplasmic.

The protein belongs to the archaeal/bacterial/fungal opsin family. As to quaternary structure, homopentamer. GPR protomers assemble into a pentamer around a central pore with a C5 symmetry axis. Contains one covalently linked retinal chromophore per subunit.

The protein localises to the cell membrane. Its function is as follows. Light-driven proton pump. This is Green-light absorbing proteorhodopsin from Unknown prokaryotic organism.